The sequence spans 66 residues: Myrmicitoxin(1)-Pr5a (66 aa).

A signal peptide spans 1–25 (MRSLYLSFSLTIIFVLVIMHAEAKA). A propeptide spanning residues 26–37 (ISEPNAIAEADP) is cleaved from the precursor. V65 is modified (valine amide).

This sequence belongs to the formicidae venom clade 3 family. As to expression, expressed by the venom gland.

It is found in the secreted. Functionally, toxin that causes a rapid and irreversible paralysis when intrathoracically injected into insects (blowflies). Does not cause spontaneous nocifensive behaviors by intraplantar injection in mice. Exhibits hemolytic and cytotoxic activities on HEK293 cells. The chain is Myrmicitoxin(1)-Pr5a from Pogonomyrmex rugosus (Desert harvester ant).